We begin with the raw amino-acid sequence, 275 residues long: Trans-aconitate 2-methyltransferase (275 aa).

This sequence belongs to the methyltransferase superfamily. Tam family.

It is found in the cytoplasm. The enzyme catalyses trans-aconitate + S-adenosyl-L-methionine = (E)-3-(methoxycarbonyl)pent-2-enedioate + S-adenosyl-L-homocysteine. Functionally, catalyzes the S-adenosylmethionine monomethyl esterification of trans-aconitate. This chain is Trans-aconitate 2-methyltransferase, found in Pseudomonas aeruginosa (strain UCBPP-PA14).